Reading from the N-terminus, the 677-residue chain is Methionine--tRNA ligase (677 aa).

A 'HIGH' region motif is present at residues 15-25; sequence PYANGSIHLGH. Residues C146, C149, C159, and C162 each contribute to the Zn(2+) site. Residues 333 to 337 carry the 'KMSKS' region motif; the sequence is KMSKS. K336 serves as a coordination point for ATP. The 103-residue stretch at 575-677 folds into the tRNA-binding domain; the sequence is DFAKVDLRVA…AGAKPGHQVK (103 aa).

Belongs to the class-I aminoacyl-tRNA synthetase family. MetG type 1 subfamily. Homodimer. The cofactor is Zn(2+).

It is found in the cytoplasm. It catalyses the reaction tRNA(Met) + L-methionine + ATP = L-methionyl-tRNA(Met) + AMP + diphosphate. Its function is as follows. Is required not only for elongation of protein synthesis but also for the initiation of all mRNA translation through initiator tRNA(fMet) aminoacylation. This Escherichia coli O17:K52:H18 (strain UMN026 / ExPEC) protein is Methionine--tRNA ligase.